The following is a 159-amino-acid chain: MNPRRKTRLWVALTVLAGLGLTMALVLYALRANIDLFYTPGEILYGKGAAQEKPEPGQRLRVGGMVMPGSVKRDSRSLKVSFRLYDARGVVDVDYDGILPDLFREGQGVVAQGVLGDDQRIHAREVLAKHDENYTPPEVKAAMDANHTRPPQAYKDNRP.

Over 1–8 (MNPRRKTR) the chain is Cytoplasmic. Residues 9-29 (LWVALTVLAGLGLTMALVLYA) traverse the membrane as a helical; Signal-anchor for type II membrane protein segment. Topologically, residues 30–159 (LRANIDLFYT…PPQAYKDNRP (130 aa)) are periplasmic. The heme site is built by H130 and Y134. The disordered stretch occupies residues 130 to 159 (HDENYTPPEVKAAMDANHTRPPQAYKDNRP).

This sequence belongs to the CcmE/CycJ family.

It is found in the cell inner membrane. Its function is as follows. Heme chaperone required for the biogenesis of c-type cytochromes. Transiently binds heme delivered by CcmC and transfers the heme to apo-cytochromes in a process facilitated by CcmF and CcmH. The chain is Cytochrome c-type biogenesis protein CcmE from Cronobacter sakazakii (strain ATCC BAA-894) (Enterobacter sakazakii).